The chain runs to 105 residues: uncharacterized protein (105 aa).

The disordered stretch occupies residues 80–105; that stretch reads TGGPTSSTCTRRSDLATGRGSDRRPD.

This is an uncharacterized protein from Micromonospora rosea.